The primary structure comprises 414 residues: Serine/arginine-rich splicing factor SR45 (414 aa).

2 disordered regions span residues 1-95 and 175-414; these read MAKP…KAVQ and LPPR…PRKT. Composition is skewed to low complexity over residues 10–34 and 42–60; these read SPSV…SRSI and RSLS…GSRS. A Nuclear localization signal 1 motif is present at residues 62–69; it reads PRRGKSPA. Phosphoserine is present on Ser77. One can recognise an RRM domain in the interval 98–176; the sequence is LVLHVDSLSR…KVVKATFTLP (79 aa). Positions 176-191 are enriched in low complexity; sequence PPRQKVSSPPKPVSAA. Residues 205–220 show a composition bias toward basic and acidic residues; that stretch reads DAEKDGGPRRPRETSP. The interval 218-219 is required for isoform 1 function in petal development; that stretch reads TS. Residues 228-243 are compositionally biased toward basic residues; that stretch reads PRRRSPLPRRGLSPRR. Residues 229-236 carry the Nuclear localization signal 2 motif; it reads RRRSPLPR. A Phosphoserine modification is found at Ser256. 3 consecutive short sequence motifs (nuclear localization signal) follow at residues 284-291, 318-325, and 338-345; these read PRRYRSPP, PRRLRSPP, and IRRPGRSR. 2 stretches are compositionally biased toward basic residues: residues 285–343 and 352–363; these read RRYR…RPGR and RKGRGPAGRRGR. Positions 364–373 are enriched in low complexity; the sequence is SSSYSSSPSP. The Nuclear localization signal 6 motif lies at 373–380; that stretch reads PRRIPRKI. The segment covering 375 to 394 has biased composition (basic residues); the sequence is RIPRKISRSRSPKRPLRGKR. Residues 404 to 414 are compositionally biased toward pro residues; it reads SPPPPPPPRKT.

This sequence belongs to the splicing factor SR family. SR45 subfamily. In terms of assembly, component of the spliceosome. Interacts with AFC2, U2AF35A, U2AF35B, RNU1, SCL33 and SKIP. The interaction with AFC2 depends on phosphorylation status. Interaction with RNU1 defines initial 5' splice sites and interaction with U2AF35B 3' splice sites in the early stage of spliceosome assembly. Phosphorylated by AFC2. The phosphorylation status regulates intranuclear distribution. Especially present in actively growing regions and dividing cells. Mostly expressed in roots (primary and secondary root meristem), shoot apical meristem (SAM), leaf primordia, pollen and inflorescence, and, to a lower extent, in leaves, vascular tissue, hydathode and fruits.

The protein resides in the nucleus speckle. Its subcellular location is the nucleus. It is found in the nucleoplasm. Involved in 5' and 3' splicing site selection of introns, and may bridge the 5' and 3' components of the spliceosome. Isoform 1 is required during flower petal development and isoform 2 is involved in root growth. Negatively regulates glucose and abscisic acid (ABA) signaling during early seedling development. Involved in the RNA-directed DNA methylation pathway. Modulates KIN10 stability in response to sugars, probably through the splicing regulation of 5PTASE13, a protein implicated in the proteasomal degradation of KIN10. The chain is Serine/arginine-rich splicing factor SR45 from Arabidopsis thaliana (Mouse-ear cress).